The chain runs to 148 residues: Caltractin (148 aa).

EF-hand domains lie at 4–39 (EQKQ…LGFE), 40–75 (PKKE…KMGE), 77–112 (DSRE…LGEN), and 113–148 (LTDE…TSLF). The Ca(2+) site is built by aspartate 17, aspartate 19, serine 21, threonine 23, glutamate 28, aspartate 53, aspartate 55, serine 57, threonine 59, and glutamate 64. Residues aspartate 126, aspartate 128, aspartate 130, glutamate 132, and glutamate 137 each coordinate Ca(2+).

The protein belongs to the centrin family. Ubiquitous.

This calcium-binding protein is found in the basal body complexes (the functional homolog of the centrosome in animal cell). In mitotic cells it is specifically associated with the poles of the mitotic spindles at the sites of the duplicated basal body complexes. This is Caltractin from Spermatozopsis similis (Green alga).